We begin with the raw amino-acid sequence, 376 residues long: Chaperone protein DnaJ (376 aa).

Residues 5–70 (DYYEVLGAAK…QKRAAYDQFG (66 aa)) form the J domain. The CR-type zinc finger occupies 134–212 (GCDEKIRIPT…CGGQGRVQNT (79 aa)). Positions 147, 150, 164, 167, 186, 189, 200, and 203 each coordinate Zn(2+). CXXCXGXG motif repeat units follow at residues 147-154 (CDVCHGSG), 164-171 (CTTCGGVG), 186-193 (CPTCKGEG), and 200-207 (CGNCGGQG).

Belongs to the DnaJ family. Homodimer. Zn(2+) serves as cofactor.

The protein localises to the cytoplasm. Its function is as follows. Participates actively in the response to hyperosmotic and heat shock by preventing the aggregation of stress-denatured proteins and by disaggregating proteins, also in an autonomous, DnaK-independent fashion. Unfolded proteins bind initially to DnaJ; upon interaction with the DnaJ-bound protein, DnaK hydrolyzes its bound ATP, resulting in the formation of a stable complex. GrpE releases ADP from DnaK; ATP binding to DnaK triggers the release of the substrate protein, thus completing the reaction cycle. Several rounds of ATP-dependent interactions between DnaJ, DnaK and GrpE are required for fully efficient folding. Also involved, together with DnaK and GrpE, in the DNA replication of plasmids through activation of initiation proteins. In Alcanivorax borkumensis (strain ATCC 700651 / DSM 11573 / NCIMB 13689 / SK2), this protein is Chaperone protein DnaJ.